Consider the following 332-residue polypeptide: Probable allantoicase (332 aa).

The protein belongs to the allantoicase family.

The catalysed reaction is allantoate + H2O = (S)-ureidoglycolate + urea. Its pathway is nitrogen metabolism; (S)-allantoin degradation; (S)-ureidoglycolate from allantoate (aminidohydrolase route): step 1/1. This is Probable allantoicase from Pseudomonas paraeruginosa (strain DSM 24068 / PA7) (Pseudomonas aeruginosa (strain PA7)).